The sequence spans 221 residues: Eukaryotic translation initiation factor 4E-2 (221 aa).

Residues 1-20 are compositionally biased toward basic and acidic residues; sequence MADELNKAALEEYKSSSVED. The tract at residues 1–36 is disordered; the sequence is MADELNKAALEEYKSSSVEDRGEEGEIVGESDDTAS. Positions 21 to 33 are enriched in acidic residues; it reads RGEEGEIVGESDD. EIF4G-binding stretches follow at residues 46 to 49 and 56 to 92; these read HPLE and FDNP…NNIH. Residues 64–69, Lys96, and 114–115 each bind mRNA; these read KQAAWG and WE. Cys119 and Cys157 form a disulfide bridge. The interval 140 to 149 is EIF4G-binding; it reads YTLLALIGEQ. Residues 164–169 and 209–213 contribute to the mRNA site; these read RVRQEK and KKLDR.

This sequence belongs to the eukaryotic initiation factor 4E family. As to quaternary structure, EIF4F is a multi-subunit complex, the composition of which varies with external and internal environmental conditions. It is composed of at least EIF4A, EIF4E and EIF4G. EIF4E is also known to interact with other partners. In higher plants two isoforms of EIF4F have been identified, named isoform EIF4F and isoform EIF(iso)4F. Isoform EIF4F has subunits p220 and p26, whereas isoform EIF(iso)4F has subunits p82 and p28. In terms of assembly, (Microbial infection) Interacts with potyvirus viral genome-linked protein (VPg) in the nucleus; mostly potato virus Y (PVY-LYE84) and tobacco etch virus (TEV-HAT) VPg, but not with PVY-LYE90 and pepper mottle virus (PepMoV) VPg; these interactions are possible in susceptible hosts but impaired in resistant plants. In terms of processing, according to the redox status, the Cys-119-Cys-157 disulfide bridge may have a role in regulating protein function by affecting its ability to bind capped mRNA.

The protein resides in the nucleus. The protein localises to the cytoplasm. Its function is as follows. Component of the protein complex eIF4F, which is involved in the recognition of the mRNA cap, ATP-dependent unwinding of 5'-terminal secondary structure and recruitment of mRNA to the ribosome. Recognizes and binds the 7-methylguanosine-containing mRNA cap during an early step in the initiation of protein synthesis and facilitates ribosome binding by inducing the unwinding of the mRNAs secondary structures. Key component of recessive resistance to potyviruses. Functionally, (Microbial infection) Susceptibility host factor required for viral infection (e.g. potato virus Y (PVY) and tobacco etch virus (TEV)) by recruiting viral RNAs to the host ribosomal complex via an interaction with viral genome-linked protein (VPg). The chain is Eukaryotic translation initiation factor 4E-2 from Solanum lycopersicum (Tomato).